The primary structure comprises 214 residues: Thymidylate kinase (214 aa).

10–17 (GPDGAGKT) is an ATP binding site.

Belongs to the thymidylate kinase family.

The catalysed reaction is dTMP + ATP = dTDP + ADP. In terms of biological role, phosphorylation of dTMP to form dTDP in both de novo and salvage pathways of dTTP synthesis. This is Thymidylate kinase from Lacticaseibacillus casei (strain BL23) (Lactobacillus casei).